Here is a 225-residue protein sequence, read N- to C-terminus: DNA-binding response regulator MtrA (225 aa).

Residues 4-117 (RILVVDDDAS…ELVARVRARL (114 aa)) form the Response regulatory domain. Aspartate 53 carries the 4-aspartylphosphate modification. The ompR/PhoB-type DNA-binding region spans 125–224 (AEMLSIADVD…VRGVGYKAGP (100 aa)).

Post-translationally, phosphorylated by MtrB.

In terms of biological role, member of the two-component regulatory system MtrA/MtrB. This chain is DNA-binding response regulator MtrA (mtrA), found in Mycobacterium leprae (strain TN).